An 811-amino-acid chain; its full sequence is Glycerol-3-phosphate acyltransferase (811 aa).

The HXXXXD motif motif lies at 303–308; that stretch reads CHRSHM.

Belongs to the GPAT/DAPAT family.

It is found in the cell inner membrane. The enzyme catalyses sn-glycerol 3-phosphate + an acyl-CoA = a 1-acyl-sn-glycero-3-phosphate + CoA. Its pathway is phospholipid metabolism; CDP-diacylglycerol biosynthesis; CDP-diacylglycerol from sn-glycerol 3-phosphate: step 1/3. This chain is Glycerol-3-phosphate acyltransferase, found in Glaesserella parasuis serovar 5 (strain SH0165) (Haemophilus parasuis).